The following is a 183-amino-acid chain: Bifunctional protein PyrR (183 aa).

The PRPP-binding signature appears at 98 to 110 (VVLVDDVLYTGRT).

It belongs to the purine/pyrimidine phosphoribosyltransferase family. PyrR subfamily.

The catalysed reaction is UMP + diphosphate = 5-phospho-alpha-D-ribose 1-diphosphate + uracil. In terms of biological role, regulates the transcription of the pyrimidine nucleotide (pyr) operon in response to exogenous pyrimidines. Also displays a weak uracil phosphoribosyltransferase activity which is not physiologically significant. This chain is Bifunctional protein PyrR, found in Roseiflexus sp. (strain RS-1).